Consider the following 387-residue polypeptide: Low specificity L-threonine aldolase (387 aa).

At lysine 213 the chain carries N6-(pyridoxal phosphate)lysine. Lysine 228 participates in a covalent cross-link: Glycyl lysine isopeptide (Lys-Gly) (interchain with G-Cter in ubiquitin). 2 positions are modified to phosphoserine: serine 367 and serine 369. Phosphothreonine is present on threonine 370.

It belongs to the threonine aldolase family. Homotetramer. Requires pyridoxal 5'-phosphate as cofactor.

The enzyme catalyses L-threonine = acetaldehyde + glycine. It carries out the reaction L-allo-threonine = acetaldehyde + glycine. Its pathway is amino-acid biosynthesis; glycine biosynthesis; glycine from L-allo-threonine: step 1/1. It functions in the pathway amino-acid degradation; L-threonine degradation via aldolase pathway; acetaldehyde and glycine from L-threonine: step 1/1. Catalyzes the cleavage of L-allo-threonine and L-threonine to glycine and acetaldehyde. This is Low specificity L-threonine aldolase (GLY1) from Saccharomyces cerevisiae (strain ATCC 204508 / S288c) (Baker's yeast).